The following is a 599-amino-acid chain: NADH-ubiquinone oxidoreductase chain 5 (599 aa).

A run of 16 helical transmembrane segments spans residues 1-21, 28-48, 81-101, 115-135, 171-191, 193-213, 233-253, 265-285, 302-322, 323-343, 363-383, 398-420, 455-475, 481-501, 510-530, and 577-597; these read MLELWGVLSLTSLGVMVIFLF, FAESVKYAGYMNAVLLSILLM, CFFVVGLYVTWNILMFSFYYM, GLFLIAMLLLVSAESLFQLLI, GDIGLLIMLMWSLVTLGDWSF, GLYALDFVNTFFLLGVVLAAA, TPVSSLLHSSTMVVAGVFLLI, IQLMVFFLGTMTTLFSAICAL, LGLMVTVVAGAGAPQLAFLHI, CMHAFFKAMLFMCSGGFIHGL, SVCFFIGSAALMGVPFLAGFF, NSWAVGLVLIATSFTAAYSVRLL, VIAGVVFIYFLSPNQISCLSL, LAAVFVTLVGGLIAWDVVNLL, IPELAFEAQVGFYPLIMHKLI, and LIKMYIAVMVMMGGLILGIMI.

It belongs to the complex I subunit 5 family.

The protein resides in the mitochondrion inner membrane. The enzyme catalyses a ubiquinone + NADH + 5 H(+)(in) = a ubiquinol + NAD(+) + 4 H(+)(out). Its function is as follows. Core subunit of the mitochondrial membrane respiratory chain NADH dehydrogenase (Complex I) that is believed to belong to the minimal assembly required for catalysis. Complex I functions in the transfer of electrons from NADH to the respiratory chain. The immediate electron acceptor for the enzyme is believed to be ubiquinone. This is NADH-ubiquinone oxidoreductase chain 5 (ND5) from Branchiostoma floridae (Florida lancelet).